The following is a 912-amino-acid chain: Protein translocase subunit SecA (912 aa).

ATP-binding positions include Q87, 105–109, and D508; that span reads GEGKT. A disordered region spans residues 864 to 912; the sequence is AEEEVEQMQGGNAPVPVSQVTRDEPKVGRNDPCPCGSGKKYKHCHGQLS. C896, C898, C907, and H908 together coordinate Zn(2+). Basic residues predominate over residues 902–912; that stretch reads KKYKHCHGQLS.

It belongs to the SecA family. In terms of assembly, monomer and homodimer. Part of the essential Sec protein translocation apparatus which comprises SecA, SecYEG and auxiliary proteins SecDF-YajC and YidC. It depends on Zn(2+) as a cofactor.

The protein localises to the cell inner membrane. Its subcellular location is the cytoplasm. It carries out the reaction ATP + H2O + cellular proteinSide 1 = ADP + phosphate + cellular proteinSide 2.. In terms of biological role, part of the Sec protein translocase complex. Interacts with the SecYEG preprotein conducting channel. Has a central role in coupling the hydrolysis of ATP to the transfer of proteins into and across the cell membrane, serving both as a receptor for the preprotein-SecB complex and as an ATP-driven molecular motor driving the stepwise translocation of polypeptide chains across the membrane. In Xanthomonas euvesicatoria pv. vesicatoria (strain 85-10) (Xanthomonas campestris pv. vesicatoria), this protein is Protein translocase subunit SecA.